A 247-amino-acid chain; its full sequence is Probable proteasome subunit alpha type-5 (247 aa).

Thr-55 is subject to Phosphothreonine.

The protein belongs to the peptidase T1A family. The 26S proteasome consists of a 20S proteasome core and two 19S regulatory subunits. The 20S proteasome core is composed of 28 subunits that are arranged in four stacked rings, resulting in a barrel-shaped structure. The two end rings are each formed by seven alpha subunits, and the two central rings are each formed by seven beta subunits. The catalytic chamber with the active sites is on the inside of the barrel.

It localises to the cytoplasm. Its subcellular location is the nucleus. Functionally, the proteasome is a multicatalytic proteinase complex which is characterized by its ability to cleave peptides with Arg, Phe, Tyr, Leu, and Glu adjacent to the leaving group at neutral or slightly basic pH. The proteasome has an ATP-dependent proteolytic activity. The protein is Probable proteasome subunit alpha type-5 (pup2) of Schizosaccharomyces pombe (strain 972 / ATCC 24843) (Fission yeast).